The following is a 428-amino-acid chain: Kynureninase (428 aa).

Residues threonine 104, threonine 105, 132 to 135 (FPSD), aspartate 213, histidine 216, and tyrosine 238 contribute to the pyridoxal 5'-phosphate site. Lysine 239 carries the N6-(pyridoxal phosphate)lysine modification. Tryptophan 267 and threonine 295 together coordinate pyridoxal 5'-phosphate.

This sequence belongs to the kynureninase family. Homodimer. The cofactor is pyridoxal 5'-phosphate.

It carries out the reaction L-kynurenine + H2O = anthranilate + L-alanine + H(+). The catalysed reaction is 3-hydroxy-L-kynurenine + H2O = 3-hydroxyanthranilate + L-alanine + H(+). The protein operates within amino-acid degradation; L-kynurenine degradation; L-alanine and anthranilate from L-kynurenine: step 1/1. It functions in the pathway cofactor biosynthesis; NAD(+) biosynthesis; quinolinate from L-kynurenine: step 2/3. Catalyzes the cleavage of L-kynurenine (L-Kyn) and L-3-hydroxykynurenine (L-3OHKyn) into anthranilic acid (AA) and 3-hydroxyanthranilic acid (3-OHAA), respectively. The polypeptide is Kynureninase (Bacillus cereus (strain ATCC 14579 / DSM 31 / CCUG 7414 / JCM 2152 / NBRC 15305 / NCIMB 9373 / NCTC 2599 / NRRL B-3711)).